Here is a 297-residue protein sequence, read N- to C-terminus: Phosphoribosylaminoimidazole-succinocarboxamide synthase (297 aa).

The protein belongs to the SAICAR synthetase family.

It catalyses the reaction 5-amino-1-(5-phospho-D-ribosyl)imidazole-4-carboxylate + L-aspartate + ATP = (2S)-2-[5-amino-1-(5-phospho-beta-D-ribosyl)imidazole-4-carboxamido]succinate + ADP + phosphate + 2 H(+). Its pathway is purine metabolism; IMP biosynthesis via de novo pathway; 5-amino-1-(5-phospho-D-ribosyl)imidazole-4-carboxamide from 5-amino-1-(5-phospho-D-ribosyl)imidazole-4-carboxylate: step 1/2. This is Phosphoribosylaminoimidazole-succinocarboxamide synthase from Mycobacteroides abscessus (strain ATCC 19977 / DSM 44196 / CCUG 20993 / CIP 104536 / JCM 13569 / NCTC 13031 / TMC 1543 / L948) (Mycobacterium abscessus).